A 317-amino-acid chain; its full sequence is Ventral anterior homeobox 1 (317 aa).

The segment at 1–62 (MEVRYSQDSE…CEKSRASSGD (62 aa)) is disordered. The segment covering 18-27 (GLKEGKEGKD) has biased composition (basic and acidic residues). The segment at residues 92–151 (PKRTRTSFTAEQLYRLEMEFQRCQYVVGRERTELARQLNLSETQVKVWFQNRRTKQKKDQ) is a DNA-binding region (homeobox). Residues 203–248 (GPSLGITANGGSSSSSRSSAGSSGTAGGSPPLPTVTSSGTVTGLQG) form a disordered region. Residues 212–225 (GGSSSSSRSSAGSS) show a composition bias toward low complexity. Residues 236–247 (TVTSSGTVTGLQ) show a composition bias toward polar residues.

This sequence belongs to the EMX homeobox family. In terms of tissue distribution, expressed in the anterior neural keel and later in the preoptic area and optic stalk.

Its subcellular location is the nucleus. Functionally, transcription factor that is required for closure of the choroid fissure and together with Vax2 is required for optic nerve differentiation and to limit retinal development to the optic cup. The sequence is that of Ventral anterior homeobox 1 (vax1) from Danio rerio (Zebrafish).